An 88-amino-acid chain; its full sequence is Conotoxin MaIr34 (88 aa).

The first 21 residues, 1–21 (MKLTCVIVAVLFLTAWTFVMA), serve as a signal peptide directing secretion. A propeptide spanning residues 22 to 53 (DDPRDGPDTAVRGGKRFWKARNEMNSAASKLN) is cleaved from the precursor. 3 disulfides stabilise this stretch: Cys-57-Cys-75, Cys-64-Cys-79, and Cys-74-Cys-83.

This sequence belongs to the conotoxin O1 superfamily. Expressed by the venom duct.

Its subcellular location is the secreted. The protein is Conotoxin MaIr34 of Conus marmoreus (Marble cone).